The sequence spans 217 residues: Ribonuclease HII (217 aa).

One can recognise an RNase H type-2 domain in the interval 27-216; it reads SRVAGVDEAG…VKESIQEGVC (190 aa). A divalent metal cation contacts are provided by Asp-33, Glu-34, and Asp-126.

Belongs to the RNase HII family. It depends on Mn(2+) as a cofactor. Mg(2+) is required as a cofactor.

It is found in the cytoplasm. The catalysed reaction is Endonucleolytic cleavage to 5'-phosphomonoester.. Its function is as follows. Endonuclease that specifically degrades the RNA of RNA-DNA hybrids. The polypeptide is Ribonuclease HII (Chlamydia trachomatis serovar A (strain ATCC VR-571B / DSM 19440 / HAR-13)).